Consider the following 300-residue polypeptide: 1D-myo-inositol 2-acetamido-2-deoxy-alpha-D-glucopyranoside deacetylase (300 aa).

Residues H13, D16, and H147 each coordinate Zn(2+).

It belongs to the MshB deacetylase family. Requires Zn(2+) as cofactor.

The catalysed reaction is 1D-myo-inositol 2-acetamido-2-deoxy-alpha-D-glucopyranoside + H2O = 1D-myo-inositol 2-amino-2-deoxy-alpha-D-glucopyranoside + acetate. Its function is as follows. Catalyzes the deacetylation of 1D-myo-inositol 2-acetamido-2-deoxy-alpha-D-glucopyranoside (GlcNAc-Ins) in the mycothiol biosynthesis pathway. The polypeptide is 1D-myo-inositol 2-acetamido-2-deoxy-alpha-D-glucopyranoside deacetylase (Mycobacterium avium (strain 104)).